Here is a 163-residue protein sequence, read N- to C-terminus: 3-hydroxyacyl-[acyl-carrier-protein] dehydratase FabZ (163 aa).

The active site involves histidine 58.

The protein belongs to the thioester dehydratase family. FabZ subfamily.

It localises to the cytoplasm. The enzyme catalyses a (3R)-hydroxyacyl-[ACP] = a (2E)-enoyl-[ACP] + H2O. In terms of biological role, involved in unsaturated fatty acids biosynthesis. Catalyzes the dehydration of short chain beta-hydroxyacyl-ACPs and long chain saturated and unsaturated beta-hydroxyacyl-ACPs. This Francisella philomiragia subsp. philomiragia (strain ATCC 25017 / CCUG 19701 / FSC 153 / O#319-036) protein is 3-hydroxyacyl-[acyl-carrier-protein] dehydratase FabZ.